A 219-amino-acid polypeptide reads, in one-letter code: Dual specificity phosphatase 29 (219 aa).

The Tyrosine-protein phosphatase domain occupies 53 to 201 (HVNEVWPKLY…LRELDRQLVQ (149 aa)). Residue 145 to 152 (HCVMGRSR) participates in substrate binding. C146 acts as the Phosphocysteine intermediate in catalysis.

Belongs to the protein-tyrosine phosphatase family. Non-receptor class dual specificity subfamily. In terms of assembly, homodimer. Interacts with PRKAA2.

The protein resides in the cytoplasm. The protein localises to the nucleus. The catalysed reaction is O-phospho-L-tyrosyl-[protein] + H2O = L-tyrosyl-[protein] + phosphate. It carries out the reaction O-phospho-L-seryl-[protein] + H2O = L-seryl-[protein] + phosphate. It catalyses the reaction O-phospho-L-threonyl-[protein] + H2O = L-threonyl-[protein] + phosphate. Its function is as follows. Dual specificity phosphatase able to dephosphorylate phosphotyrosine, phosphoserine and phosphothreonine residues within the same substrate, with a preference for phosphotyrosine as a substrate. Involved in the modulation of intracellular signaling cascades. May regulate glucose metabolism by activating, AMPK, an energy sensor protein kinase. Affects MAP kinase signaling though modulation of the ERK1/2 cascade in skeletal muscle promoting muscle cell differentiation, development and atrophy. The chain is Dual specificity phosphatase 29 (DUSP29) from Bos taurus (Bovine).